The following is an 87-amino-acid chain: U3-theraphotoxin-Hhn1p (87 aa).

A signal peptide spans 1–24; that stretch reads MVNMKASMFLTFAGLVLLFVVCYA. Residues 25–52 constitute a propeptide that is removed on maturation; it reads SESEEKEFPKEMLSSIFAVDNDFKQEER. 3 disulfides stabilise this stretch: C54–C67, C61–C72, and C66–C79.

This sequence belongs to the neurotoxin 10 (Hwtx-1) family. 51 (Hntx-8) subfamily. Hntx-8 sub-subfamily. As to expression, expressed by the venom gland.

The protein localises to the secreted. In terms of biological role, ion channel inhibitor. The sequence is that of U3-theraphotoxin-Hhn1p from Cyriopagopus hainanus (Chinese bird spider).